The chain runs to 159 residues: Ribosomal RNA large subunit methyltransferase H (159 aa).

S-adenosyl-L-methionine-binding positions include glycine 108 and 127–132; that span reads FGKLTM.

The protein belongs to the RNA methyltransferase RlmH family. Homodimer.

Its subcellular location is the cytoplasm. The enzyme catalyses pseudouridine(1915) in 23S rRNA + S-adenosyl-L-methionine = N(3)-methylpseudouridine(1915) in 23S rRNA + S-adenosyl-L-homocysteine + H(+). Functionally, specifically methylates the pseudouridine at position 1915 (m3Psi1915) in 23S rRNA. In Lactobacillus helveticus (strain DPC 4571), this protein is Ribosomal RNA large subunit methyltransferase H.